The primary structure comprises 184 residues: NADH-quinone oxidoreductase subunit B (184 aa).

Residues Cys-37, Cys-38, Cys-103, and Cys-132 each coordinate [4Fe-4S] cluster.

It belongs to the complex I 20 kDa subunit family. In terms of assembly, NDH-1 is composed of 14 different subunits. Subunits NuoB, C, D, E, F, and G constitute the peripheral sector of the complex. [4Fe-4S] cluster is required as a cofactor.

It is found in the cell membrane. It catalyses the reaction a quinone + NADH + 5 H(+)(in) = a quinol + NAD(+) + 4 H(+)(out). NDH-1 shuttles electrons from NADH, via FMN and iron-sulfur (Fe-S) centers, to quinones in the respiratory chain. The immediate electron acceptor for the enzyme in this species is believed to be a menaquinone. Couples the redox reaction to proton translocation (for every two electrons transferred, four hydrogen ions are translocated across the cytoplasmic membrane), and thus conserves the redox energy in a proton gradient. This Mycobacterium bovis (strain BCG / Pasteur 1173P2) protein is NADH-quinone oxidoreductase subunit B.